Here is a 487-residue protein sequence, read N- to C-terminus: Glutamyl-tRNA(Gln) amidotransferase subunit A (487 aa).

Catalysis depends on charge relay system residues K79 and S158. S182 acts as the Acyl-ester intermediate in catalysis.

It belongs to the amidase family. GatA subfamily. Heterotrimer of A, B and C subunits.

The catalysed reaction is L-glutamyl-tRNA(Gln) + L-glutamine + ATP + H2O = L-glutaminyl-tRNA(Gln) + L-glutamate + ADP + phosphate + H(+). Its function is as follows. Allows the formation of correctly charged Gln-tRNA(Gln) through the transamidation of misacylated Glu-tRNA(Gln) in organisms which lack glutaminyl-tRNA synthetase. The reaction takes place in the presence of glutamine and ATP through an activated gamma-phospho-Glu-tRNA(Gln). This is Glutamyl-tRNA(Gln) amidotransferase subunit A from Ehrlichia chaffeensis (strain ATCC CRL-10679 / Arkansas).